The primary structure comprises 309 residues: Porphobilinogen deaminase (309 aa).

The residue at position 242 (C242) is an S-(dipyrrolylmethanemethyl)cysteine.

This sequence belongs to the HMBS family. Monomer. Requires dipyrromethane as cofactor.

It carries out the reaction 4 porphobilinogen + H2O = hydroxymethylbilane + 4 NH4(+). Its pathway is porphyrin-containing compound metabolism; protoporphyrin-IX biosynthesis; coproporphyrinogen-III from 5-aminolevulinate: step 2/4. Functionally, tetrapolymerization of the monopyrrole PBG into the hydroxymethylbilane pre-uroporphyrinogen in several discrete steps. In Shewanella woodyi (strain ATCC 51908 / MS32), this protein is Porphobilinogen deaminase.